Reading from the N-terminus, the 261-residue chain is 5'-nucleotidase SurE (261 aa).

Aspartate 8, aspartate 9, serine 43, and asparagine 96 together coordinate a divalent metal cation.

This sequence belongs to the SurE nucleotidase family. A divalent metal cation serves as cofactor.

It is found in the cytoplasm. It carries out the reaction a ribonucleoside 5'-phosphate + H2O = a ribonucleoside + phosphate. In terms of biological role, nucleotidase that shows phosphatase activity on nucleoside 5'-monophosphates. The protein is 5'-nucleotidase SurE of Cereibacter sphaeroides (strain KD131 / KCTC 12085) (Rhodobacter sphaeroides).